Reading from the N-terminus, the 143-residue chain is Large ribosomal subunit protein uL13 (143 aa).

The protein belongs to the universal ribosomal protein uL13 family. In terms of assembly, part of the 50S ribosomal subunit.

This protein is one of the early assembly proteins of the 50S ribosomal subunit, although it is not seen to bind rRNA by itself. It is important during the early stages of 50S assembly. This Rubrobacter xylanophilus (strain DSM 9941 / JCM 11954 / NBRC 16129 / PRD-1) protein is Large ribosomal subunit protein uL13.